The chain runs to 871 residues: Probable inorganic carbon transporter subunit DabA (871 aa).

Residues Cys-396, Asp-398, His-577, and Cys-592 each contribute to the Zn(2+) site.

It belongs to the inorganic carbon transporter (TC 9.A.2) DabA family. Forms a complex with DabB. The cofactor is Zn(2+).

The protein resides in the cell membrane. In terms of biological role, part of an energy-coupled inorganic carbon pump. The sequence is that of Probable inorganic carbon transporter subunit DabA from Bacillus subtilis (strain 168).